Here is a 1202-residue protein sequence, read N- to C-terminus: Phospholipid-transporting ATPase 10 (1202 aa).

Residues 1-73 are Cytoplasmic-facing; it reads MAGPSRRRRR…STKYTVASFF (73 aa). Residues 74 to 95 traverse the membrane as a helical segment; it reads PKSLFEQFRRVANFYFLVTGIL. The Extracellular segment spans residues 96–99; the sequence is SLTD. The helical transmembrane segment at 100–122 threads the bilayer; the sequence is LSPYGAVSALLPLALVISATMVK. Residues 123-305 are Cytoplasmic-facing; the sequence is EGIEDWRRKQ…SRIERTMDKI (183 aa). The chain crosses the membrane as a helical span at residues 306-327; it reads IYLMFGLVFLMSFVGSIIFGVE. The Extracellular segment spans residues 328–364; sequence TREDKVKNGRTERWYLKPDDADIFFDPERAPMAAIYH. The helical transmembrane segment at 365 to 382 threads the bilayer; the sequence is FFTATMLYSYFIPISLYV. The Cytoplasmic portion of the chain corresponds to 383-920; it reads SIEIVKVLQS…HGHWCYSRIA (538 aa). The active-site 4-aspartylphosphate intermediate is Asp430. Asp865 and Asp869 together coordinate Mg(2+). A helical membrane pass occupies residues 921-940; sequence SMICYFFYKNITFGVTVFLY. Topologically, residues 941–954 are extracellular; that stretch reads EAYTSFSGQPAYND. The chain crosses the membrane as a helical span at residues 955-974; it reads WFLSLFNVFFSSLPVIALGV. The Cytoplasmic portion of the chain corresponds to 975 to 1004; the sequence is FDQDVSARFCYKFPLLYQEGVQNILFSWKR. The chain crosses the membrane as a helical span at residues 1005-1027; it reads IIGWMFNGFISALAIFFLCKESL. Over 1028–1040 the chain is Extracellular; the sequence is KHQLFDPDGKTAG. The chain crosses the membrane as a helical span at residues 1041-1063; the sequence is REILGGTMYTCVVWVVNLQMALS. At 1064–1069 the chain is on the cytoplasmic side; the sequence is ISYFTW. The helical transmembrane segment at 1070 to 1090 threads the bilayer; the sequence is VQHIVIWGSIAFWYIFLMIYG. Residues 1091–1107 lie on the Extracellular side of the membrane; the sequence is AMTPSFSTDAYMVFLEA. A helical membrane pass occupies residues 1108-1132; it reads LAPAPSYWLTTLFVMIFALIPYFVY. The Cytoplasmic portion of the chain corresponds to 1133 to 1202; the sequence is KSVQMRFFPK…DQIYKDLVGV (70 aa).

It belongs to the cation transport ATPase (P-type) (TC 3.A.3) family. Type IV subfamily.

Its subcellular location is the cell membrane. The enzyme catalyses ATP + H2O + phospholipidSide 1 = ADP + phosphate + phospholipidSide 2.. Involved in transport of phospholipids. In Arabidopsis thaliana (Mouse-ear cress), this protein is Phospholipid-transporting ATPase 10.